A 145-amino-acid chain; its full sequence is 3-hydroxyacyl-[acyl-carrier-protein] dehydratase FabZ (145 aa).

His51 is an active-site residue.

It belongs to the thioester dehydratase family. FabZ subfamily.

It is found in the cytoplasm. The enzyme catalyses a (3R)-hydroxyacyl-[ACP] = a (2E)-enoyl-[ACP] + H2O. Functionally, involved in unsaturated fatty acids biosynthesis. Catalyzes the dehydration of short chain beta-hydroxyacyl-ACPs and long chain saturated and unsaturated beta-hydroxyacyl-ACPs. The polypeptide is 3-hydroxyacyl-[acyl-carrier-protein] dehydratase FabZ (Macrococcus caseolyticus (strain JCSC5402) (Macrococcoides caseolyticum)).